The following is a 1258-amino-acid chain: MILQSTSLFCKYINNCRYINREIVATLKASPQGLARIKQARSDRGWSVDDFRWLELASEILGVCWQENGVLAAGISEGTWKRFLAGKQAINAEAFKAYCQVLGLNWEEVQEGGRTKERKDTGTSRQEKFLSSSHPHTDWGEAPDVSIFYGRSEELDTVKRWVTQENCRLITLLGMGGIGKTTLSVKLAQEIINSEKIYLSQSPEYIIWRSLRNAPPVEDILAELIQFLSGQQETNLSNHLQGRISLLLKNLRSSRCLIILDNAESILQAGDRNGRYRAGCEGYGQFLQCIAETSHQSCLILTSREKPQGLAKYEGDSLPVRSLPLTGLQEQEGRELFNVKGKFAASCDQWQVLISRYGGNPLALKIVASSIRDFFDGDVSQFLEVSQQGTFIFDDIRDLLDQQFQRLTTLEREIMYWLAINREPVTLAELQADFVANIPPRELLESLSSLQRRSLIEKSAGGFTQQPVVMEYVSNHLIEQVCEEMREWGLVRSRGAEEQRSRGEKIHTQYKLNAALPLTALSTPLFTTHALIKAQAKDYVRESQISLILQPLINQLITEFGSLENISNCLVHILSRLRGKSPQETGYAGGNVLNLLHHAQVDLSGYDFSGLTVWQAYLQGVNLHDVDFANSDLSCCVFTETLGNILSAAFSPEGQLLATCDTDCHVRVWEVKSGKLLLICRGHSNWVRFVVFSPDGEILASCGADENVKLWSVRDGVCIKTLTGHEHEVFSVAFHPDGETLASASGDKTIKLWDIQDGTCLQTLTGHTDWVRCVAFSPDGNTLASSAADHTIKLWDVSQGKCLRTLKSHTGWVRSVAFSADGQTLASGSGDRTIKIWNYHTGECLKTYIGHTNSVYSIAYSPDSKILVSGSGDRTIKLWDCQTHICIKTLHGHTNEVCSVAFSPDGQTLACVSLDQSVRLWNCRTGQCLKAWYGNTDWALPVAFSPDRQILASGSNDKTVKLWDWQTGKYISSLEGHTDFIYGIAFSPDSQTLASASTDSSVRLWNISTGQCFQILLEHTDWVYAVVFHPQGKIIATGSADCTVKLWNISTGQCLKTLSEHSDKILGMAWSPDGQLLASASADQSVRLWDCCTGRCVGILRGHSNRVYSAIFSPNGEIIATCSTDQTVKIWDWQQGKCLKTLTGHTNWVFDIAFSPDGKILASASHDQTVRIWDVNTGKCHHICIGHTHLVSSVAFSPDGEVVASGSQDQTVRIWNVKTGECLQILRAKRLYEGMNITGVTGLTKATIFTLQALGALR.

Residues 55-93 form a WD 1 repeat; the sequence is ELASEILGVCWQENGVLAAGISEGTWKRFLAGKQAINAE. Residues 112–128 show a composition bias toward basic and acidic residues; it reads GGRTKERKDTGTSRQEK. The interval 112–138 is disordered; that stretch reads GGRTKERKDTGTSRQEKFLSSSHPHTD. WD repeat units follow at residues 640–679, 682–721, 724–763, 766–807, 809–849, 850–889, 892–931, 934–975, 976–1017, 1019–1059, 1060–1101, 1103–1143, 1144–1183, and 1186–1227; these read ETLG…LLLI, GHSN…CIKT, GHEH…CLQT, GHTD…RTLK, HTGW…KTYI, GHTN…CIKT, GHTN…CLKA, GNTD…SSLE, GHTD…QILL, HTDW…KTLS, EHSD…GILR, HSNR…KTLT, GHTN…CHHI, and GHTH…QILR.

This is an uncharacterized protein from Nostoc sp. (strain PCC 7120 / SAG 25.82 / UTEX 2576).